Here is a 595-residue protein sequence, read N- to C-terminus: Prolycopene isomerase, chloroplastic (595 aa).

A chloroplast-targeting transit peptide spans 1-56 (MDLCFQNPVKCGDRLFSALNTSTYYKLGTSNLGFNGPVLENRKKKKKLPRMVTVKS). N-acetylvaline is present on valine 57.

This sequence belongs to the carotenoid/retinoid oxidoreductase family. CrtISO subfamily. Requires NAD(+) as cofactor. NADP(+) serves as cofactor. It depends on FAD as a cofactor.

It is found in the plastid. Its subcellular location is the chloroplast membrane. It carries out the reaction 7,7',9,9'-tetra-cis-lycopene = all-trans-lycopene. The protein operates within carotenoid biosynthesis; lycopene biosynthesis. Functionally, carotene cis-trans-isomerase that converts 7,9,9'-tri-cis-neurosporene to 9'-cis-neurosporene and 7,9,9',7'-tetra-cis-lycopene (also known as prolycopene) into all-trans-lycopene. Isomerization requires redox-active components, suggesting that isomerization is achieved by a reversible redox reaction acting at specific double bonds. Isomerizes adjacent cis-double bonds at C7 and C9 pairwise into the trans-configuration, but is incapable of isomerizing single cis-double bonds at C9 and C9'. Carotenoid biosynthesis is partly required to form the prolamellar bodies of etioplasts. This is Prolycopene isomerase, chloroplastic (CRTISO) from Arabidopsis thaliana (Mouse-ear cress).